Consider the following 465-residue polypeptide: Cysteine--tRNA ligase (465 aa).

Cys30 contacts Zn(2+). A 'HIGH' region motif is present at residues Ile32–His42. Residues Cys214, His239, and Glu243 each contribute to the Zn(2+) site. The short motif at Lys271–Ser275 is the 'KMSKS' region element. Lys274 serves as a coordination point for ATP.

Belongs to the class-I aminoacyl-tRNA synthetase family. Monomer. Zn(2+) serves as cofactor.

It is found in the cytoplasm. It catalyses the reaction tRNA(Cys) + L-cysteine + ATP = L-cysteinyl-tRNA(Cys) + AMP + diphosphate. In Burkholderia ambifaria (strain MC40-6), this protein is Cysteine--tRNA ligase.